Consider the following 391-residue polypeptide: MNDSVFSKKRILLLGSGELGKELVIESKRLGLEVIAIDRYEKAPAMQVADYSKVIDMGDKNILKNSIKEFTPDFVVPEIEALSIEALKELEDEGFKIVPNARTVEITMNRDKIRELVSRDLKIKTANYDYIYKFEDLEKKADEIGFPLLLKPLMSSSGKGQSLVGSKNDLNQAWSQAQANSRGQVKGVIIEEFINFDFEFTLLTVRKNNGENIFCLPIGHLQSNGDYQCSWHPLEINQSLISEAKKMTTKILNNLNGSGLYGVEFFVKENEVIFSELSPRPHDTGMVTLVSQNINEFELHLRAFLNLPIPHINLIEPSATRVILSDQEHMNPIYEGLNEALEVENTKVLIFGKPISRKGRRMGVVLSSNSDINLARKNADEAARKIKVSSK.

N(1)-(5-phospho-beta-D-ribosyl)glycinamide-binding positions include 18–19 (EL) and Glu-78. ATP-binding positions include Arg-110, Lys-151, 156–161 (SSGKGQ), 191–194 (EEFI), and Glu-199. In terms of domain architecture, ATP-grasp spans 115–305 (ELVSRDLKIK…EFELHLRAFL (191 aa)). Positions 264 and 276 each coordinate Mg(2+). N(1)-(5-phospho-beta-D-ribosyl)glycinamide is bound by residues Asp-283, Lys-353, and 360 to 361 (RR).

Belongs to the PurK/PurT family. As to quaternary structure, homodimer.

It carries out the reaction N(1)-(5-phospho-beta-D-ribosyl)glycinamide + formate + ATP = N(2)-formyl-N(1)-(5-phospho-beta-D-ribosyl)glycinamide + ADP + phosphate + H(+). Its pathway is purine metabolism; IMP biosynthesis via de novo pathway; N(2)-formyl-N(1)-(5-phospho-D-ribosyl)glycinamide from N(1)-(5-phospho-D-ribosyl)glycinamide (formate route): step 1/1. In terms of biological role, involved in the de novo purine biosynthesis. Catalyzes the transfer of formate to 5-phospho-ribosyl-glycinamide (GAR), producing 5-phospho-ribosyl-N-formylglycinamide (FGAR). Formate is provided by PurU via hydrolysis of 10-formyl-tetrahydrofolate. This chain is Formate-dependent phosphoribosylglycinamide formyltransferase, found in Prochlorococcus marinus (strain MIT 9312).